Here is an 84-residue protein sequence, read N- to C-terminus: uncharacterized protein (84 aa).

Basic residues-rich tracts occupy residues 1 to 15 and 67 to 84; these read MPPH…HGHH and HHGH…GHFF. Disordered stretches follow at residues 1 to 22 and 64 to 84; these read MPPH…TYTT and TSHH…GHFF.

This is an uncharacterized protein from Dictyostelium discoideum (Social amoeba).